The following is a 477-amino-acid chain: Solute carrier family 2, facilitated glucose transporter member 8 (477 aa).

Residues Met-1 to Arg-25 lie on the Cytoplasmic side of the membrane. Positions Leu-12–Leu-13 match the Dileucine internalization motif motif. Residues Val-26–Tyr-46 traverse the membrane as a helical segment. Residues Ser-47–Ser-70 are Extracellular-facing. The helical transmembrane segment at Trp-71–Leu-91 threads the bilayer. The Cytoplasmic portion of the chain corresponds to Asp-92–Arg-96. A helical transmembrane segment spans residues Lys-97–Ala-117. Topologically, residues Arg-118–Arg-127 are extracellular. The chain crosses the membrane as a helical span at residues Leu-128–Ile-148. Residues Ala-149–Leu-156 lie on the Cytoplasmic side of the membrane. The helical transmembrane segment at Leu-157 to Trp-177 threads the bilayer. Residue Gln-162 participates in D-glucose binding. Over Val-178–Arg-182 the chain is Extracellular. A helical membrane pass occupies residues Trp-183–Pro-203. At Glu-204 to Pro-257 the chain is on the cytoplasmic side. A helical membrane pass occupies residues Leu-258–Phe-278. D-glucose-binding positions include Gln-268–Gln-269 and Asn-274. Topologically, residues Tyr-279 to Ser-293 are extracellular. The helical transmembrane segment at Leu-294–Met-314 threads the bilayer. Topologically, residues Asp-315–Arg-320 are cytoplasmic. The chain crosses the membrane as a helical span at residues Leu-321–Phe-341. Over Lys-342–Gln-367 the chain is Extracellular. Asn-350 carries an N-linked (GlcNAc...) asparagine glycan. Residues Val-368–Gly-388 traverse the membrane as a helical segment. Residues Trp-389–His-404 are Cytoplasmic-facing. Trp-394 serves as a coordination point for D-glucose. The chain crosses the membrane as a helical span at residues Val-405–Thr-425. Residues Lys-426–Tyr-438 are Extracellular-facing. The chain crosses the membrane as a helical span at residues Gly-439–Val-459. Residues Pro-460–Arg-477 are Cytoplasmic-facing.

It belongs to the major facilitator superfamily. Sugar transporter (TC 2.A.1.1) family. Glucose transporter subfamily. In terms of assembly, interacts with AP2B1. Also able to mediate the transport of dehydroascorbate. As to expression, highest level of expression in placenta and testis. Highly expressed in adult and pubertal testis, but not prepubertal testis. Lower levels of expression in brain, liver, heart, kidney, fat and skeletal muscle.

It is found in the cell membrane. It localises to the cytoplasmic vesicle membrane. It catalyses the reaction D-glucose(out) = D-glucose(in). The enzyme catalyses D-fructose(out) = D-fructose(in). It carries out the reaction L-dehydroascorbate(out) = L-dehydroascorbate(in). The catalysed reaction is alpha,alpha-trehalose(in) = alpha,alpha-trehalose(out). Inhibited by cytochalasin B. Its function is as follows. Insulin-regulated facilitative hexose transporter that mediates the transport of glucose and fructose. Facilitates hepatic influx of dietary trehalose, which in turn inhibits glucose and fructose influx triggering a starvation signal and hepatic autophagy through activation of AMPK and ULK1. Also able to mediate the transport of dehydroascorbate. The protein is Solute carrier family 2, facilitated glucose transporter member 8 of Mus musculus (Mouse).